A 133-amino-acid polypeptide reads, in one-letter code: Small ribosomal subunit protein eS8 (133 aa).

Residues 1 to 22 (MGFYQGPDNRKITGGLKGKHRD) form a disordered region.

Belongs to the eukaryotic ribosomal protein eS8 family. As to quaternary structure, part of the 30S ribosomal subunit.

This is Small ribosomal subunit protein eS8 from Saccharolobus islandicus (strain M.14.25 / Kamchatka #1) (Sulfolobus islandicus).